We begin with the raw amino-acid sequence, 75 residues long: Calhepatin (75 aa).

At S1 the chain carries N-acetylserine. 2 consecutive EF-hand domains span residues 2-37 and 38-73; these read ADEQKLRERFEALDKDKSGTLSVDELYEGVHAVHPK and VSRNDIVKIIEKVDTNKDGQVSWQEFIEAFKRLADL. D15, D17, S19, T21, E26, D51, N53, D55, Q57, and E62 together coordinate Ca(2+).

Monomer and homodimer. Liver, and to a much lower level intestine.

Functionally, binds both calcium and copper, but not zinc. May be involved in calcium signal transduction. This Lepidosiren paradoxus (South American lungfish) protein is Calhepatin.